Here is a 237-residue protein sequence, read N- to C-terminus: Ribose-5-phosphate isomerase A (237 aa).

Substrate is bound by residues 30–33 (SGST), 87–90 (DGAD), and 100–103 (KGGG). Residue Glu109 is the Proton acceptor of the active site. Lys127 is a binding site for substrate.

The protein belongs to the ribose 5-phosphate isomerase family. As to quaternary structure, homodimer.

The catalysed reaction is aldehydo-D-ribose 5-phosphate = D-ribulose 5-phosphate. It participates in carbohydrate degradation; pentose phosphate pathway; D-ribose 5-phosphate from D-ribulose 5-phosphate (non-oxidative stage): step 1/1. Catalyzes the reversible conversion of ribose-5-phosphate to ribulose 5-phosphate. This is Ribose-5-phosphate isomerase A from Prochlorococcus marinus (strain MIT 9211).